The primary structure comprises 263 residues: 2-dehydro-3-deoxyphosphooctonate aldolase (263 aa).

This sequence belongs to the KdsA family.

The protein localises to the cytoplasm. It carries out the reaction D-arabinose 5-phosphate + phosphoenolpyruvate + H2O = 3-deoxy-alpha-D-manno-2-octulosonate-8-phosphate + phosphate. Its pathway is carbohydrate biosynthesis; 3-deoxy-D-manno-octulosonate biosynthesis; 3-deoxy-D-manno-octulosonate from D-ribulose 5-phosphate: step 2/3. The protein operates within bacterial outer membrane biogenesis; lipopolysaccharide biosynthesis. The sequence is that of 2-dehydro-3-deoxyphosphooctonate aldolase from Wolinella succinogenes (strain ATCC 29543 / DSM 1740 / CCUG 13145 / JCM 31913 / LMG 7466 / NCTC 11488 / FDC 602W) (Vibrio succinogenes).